The primary structure comprises 87 residues: MAHKKAGGSSRNGRDSESKRLGVKRYGGQFVLAGNIIVRQRGTEYHPGENVGIGKDHTLFALKDGTVQFTIKGAQRRRTVVIVPEAA.

A disordered region spans residues 1–21 (MAHKKAGGSSRNGRDSESKRL).

This sequence belongs to the bacterial ribosomal protein bL27 family.

This Aromatoleum aromaticum (strain DSM 19018 / LMG 30748 / EbN1) (Azoarcus sp. (strain EbN1)) protein is Large ribosomal subunit protein bL27.